The following is an 83-amino-acid chain: MEQAPNDNGPQREPYTEWLLDILEEIKQEAVKHFPRPILQGVGNWVFTIYGDSWEGVQELIKILQRALFTHYRHGCIHSRIGS.

Position 79 is a phosphoserine; by host (Ser79).

As to quaternary structure, interacts with human UNG.

Its subcellular location is the virion. It is found in the host nucleus. Its function is as follows. Stimulates gene expression driven by the HIV-2 LTR. Prevents infected cells from undergoing mitosis and proliferating, by inducing arrest or delay in the G2 phase of the cell cycle. Cell cycle arrest creates a favorable environment for maximizing viral expression and production. The sequence is that of Protein Vpr from Pan troglodytes (Chimpanzee).